Reading from the N-terminus, the 221-residue chain is Type 3 secretion system stator protein (221 aa).

The protein belongs to the SctL stator family. In terms of assembly, the core secretion machinery of the T3SS is composed of approximately 20 different proteins, including cytoplasmic components, a base, an export apparatus and a needle. This subunit is part of the cytosolic complex. Interacts directly with YscN/SctN (T3SS ATPase) and YscQ/SctQ (the major sorting platform component).

It localises to the cytoplasm. In terms of biological role, component of the type III secretion system (T3SS), also called injectisome, which is used to inject bacterial effector proteins into eukaryotic host cells. Acts as a regulator of the YscN/SctN ATPase activity. The sequence is that of Type 3 secretion system stator protein from Yersinia pestis.